We begin with the raw amino-acid sequence, 292 residues long: uncharacterized protein (292 aa).

The next 5 helical transmembrane spans lie at 57 to 77 (IISLVIFLVGSVLSKHILTLI), 101 to 121 (VYVFIPIFAGIIAIPVMFNFM), 143 to 163 (LIYAITFTLRVATCVSFAVLI), 184 to 204 (VVITITNLAYRYIFLLLNFVL), and 271 to 291 (IAFLLFSIIITALLVLFDRGI).

Belongs to the CbiQ family.

It is found in the cell membrane. This is an uncharacterized protein from Methanocaldococcus jannaschii (strain ATCC 43067 / DSM 2661 / JAL-1 / JCM 10045 / NBRC 100440) (Methanococcus jannaschii).